We begin with the raw amino-acid sequence, 159 residues long: 2-C-methyl-D-erythritol 2,4-cyclodiphosphate synthase (159 aa).

A divalent metal cation is bound by residues Asp-8 and His-10. 4-CDP-2-C-methyl-D-erythritol 2-phosphate-binding positions include 8–10 (DVH) and 34–35 (HS). A divalent metal cation is bound at residue His-42. Residues 56–58 (DIG), 61–65 (FPDTD), 100–106 (AQAPKML), 132–135 (TTTE), Phe-139, and Arg-142 contribute to the 4-CDP-2-C-methyl-D-erythritol 2-phosphate site.

It belongs to the IspF family. Homotrimer. A divalent metal cation serves as cofactor.

The enzyme catalyses 4-CDP-2-C-methyl-D-erythritol 2-phosphate = 2-C-methyl-D-erythritol 2,4-cyclic diphosphate + CMP. It functions in the pathway isoprenoid biosynthesis; isopentenyl diphosphate biosynthesis via DXP pathway; isopentenyl diphosphate from 1-deoxy-D-xylulose 5-phosphate: step 4/6. Its function is as follows. Involved in the biosynthesis of isopentenyl diphosphate (IPP) and dimethylallyl diphosphate (DMAPP), two major building blocks of isoprenoid compounds. Catalyzes the conversion of 4-diphosphocytidyl-2-C-methyl-D-erythritol 2-phosphate (CDP-ME2P) to 2-C-methyl-D-erythritol 2,4-cyclodiphosphate (ME-CPP) with a corresponding release of cytidine 5-monophosphate (CMP). In Klebsiella pneumoniae subsp. pneumoniae (strain ATCC 700721 / MGH 78578), this protein is 2-C-methyl-D-erythritol 2,4-cyclodiphosphate synthase.